Consider the following 869-residue polypeptide: Facilitated trehalose transporter Tret1 (869 aa).

Disordered stretches follow at residues 1-214 and 258-315; these read MSGR…QKAT and KESS…LIHR. Topologically, residues 1 to 404 are cytoplasmic; sequence MSGRDNRGAG…VYRPTTNPIY (404 aa). Residues 25 to 43 are compositionally biased toward basic and acidic residues; sequence KLKEKLTRAGDDQGYHRVE. Low complexity-rich tracts occupy residues 44–57, 79–92, and 118–127; these read SNLS…SLDT, PQQQ…QQLR, and PFQQQQQRTP. Basic and acidic residues-rich tracts occupy residues 147–156 and 258–291; these read EIREHRDRQQ and KESS…KLDK. Phosphoserine occurs at positions 260, 261, 262, 332, and 334. Residues 336–368 are disordered; the sequence is EDFHTSRQHFQQQRSISTDSRKSRRPYEMDEMG. The span at 343-353 shows a compositional bias: polar residues; the sequence is QHFQQQRSIST. Basic and acidic residues predominate over residues 354 to 368; the sequence is DSRKSRRPYEMDEMG. A helical membrane pass occupies residues 405 to 425; that stretch reads IWTQVLAALSVSLGSLVVGFV. Over 426-452 the chain is Extracellular; it reads SAYTSPALVSMTNRNMTSFEVTPQAAS. N-linked (GlcNAc...) asparagine glycosylation occurs at asparagine 440. The helical transmembrane segment at 453-473 threads the bilayer; that stretch reads WVGGIMPLAGLAGGIAGGPFI. The Cytoplasmic portion of the chain corresponds to 474 to 485; sequence EYLGRRNTILAT. The chain crosses the membrane as a helical span at residues 486–506; the sequence is AIPFIVSSLLIACAVNVAMVL. The Extracellular segment spans residues 507-509; that stretch reads AGR. The helical transmembrane segment at 510–530 threads the bilayer; it reads FLAGFCVGIASLSLPVYLGET. The Cytoplasmic portion of the chain corresponds to 531–536; it reads VQPEVR. Residues 537–557 traverse the membrane as a helical segment; the sequence is GTLGLLPTAFGNIGILLCFVA. The Extracellular portion of the chain corresponds to 558–564; the sequence is GTYMDWS. Residues 565-585 form a helical membrane-spanning segment; that stretch reads MLAFLGAALPVPFLILMFLIP. Residues 586–654 are Cytoplasmic-facing; that stretch reads ETPRWFVSRG…NLKPLSISLG (69 aa). The chain crosses the membrane as a helical span at residues 655–675; the sequence is LMFFQQLSGINAVIFYTVSIF. Over 676–685 the chain is Extracellular; sequence KDAGSTIDGN. Residues 686–706 traverse the membrane as a helical segment; the sequence is LCTIIVGIVNFMATFIATLLI. The Cytoplasmic portion of the chain corresponds to 707–712; that stretch reads DRAGRK. A helical membrane pass occupies residues 713 to 733; that stretch reads ILLYVSNIAMIITLFVLGGFF. Topologically, residues 734-752 are extracellular; that stretch reads YCKSHGQDVSQLGWLPLSC. The chain crosses the membrane as a helical span at residues 753–773; sequence FVIYILGFSLGFGPIPWLMMG. At 774 to 779 the chain is on the cytoplasmic side; that stretch reads EILPSK. Residues 780–800 form a helical membrane-spanning segment; the sequence is IRGSAASVATAFNWSCTFVVT. Residues 801–813 lie on the Extracellular side of the membrane; it reads KTFQDMIDFMGAH. The helical transmembrane segment at 814–834 threads the bilayer; that stretch reads GAFWLFGSICFIGLFFVILYV. Residues 835-869 are Cytoplasmic-facing; that stretch reads PETQGKTLEDIERKMMGRVRRMSSVANMKPLAFNM. Phosphoserine is present on residues serine 857 and serine 858.

It belongs to the major facilitator superfamily. Sugar transporter (TC 2.A.1.1) family. Trehalose transporter subfamily.

It is found in the cell membrane. In terms of biological role, low-capacity facilitative transporter for trehalose. Does not transport maltose, sucrose or lactose. Mediates the bidirectional transfer of trehalose. Responsible for the transport of trehalose synthesized in the fat body and the incorporation of trehalose into other tissues that require a carbon source, thereby regulating trehalose levels in the hemolymph. The sequence is that of Facilitated trehalose transporter Tret1 from Drosophila persimilis (Fruit fly).